The chain runs to 464 residues: Splicing factor 3A subunit 2 (464 aa).

Met-1 is subject to N-acetylmethionine. Residues 1-27 are disordered; the sequence is MDFQHRPGGKTGSGGVASSSESNRDRR. N6-acetyllysine is present on Lys-10. The segment at 54–84 adopts a Matrin-type zinc-finger fold; that stretch reads YECKLCLTLHNNEGSYLAHTQGKKHQTNLAR. Ser-153 carries the post-translational modification Phosphoserine. Pro residues-rich tracts occupy residues 217–295, 303–323, and 331–369; these read PPAP…PVVH, PPAPGVHPPAPGVHPPAPGVH, and PPAPGVHPPAPGVHPPAPGVHPPAPGVHPPAPGVHPPPS. The segment at 217-464 is disordered; it reads PPAPPSLPAG…GNIPPPPPTN (248 aa). The segment covering 370-392 has biased composition (low complexity); the sequence is AGVHPQAPGVHPAAPAVHPQAPG. Positions 435–464 are enriched in pro residues; sequence VHPPTPMPPMLRPPLPSEGPGNIPPPPPTN.

It belongs to the SF3A2 family. Component of the 17S U2 SnRNP complex, a ribonucleoprotein complex that contains small nuclear RNA (snRNA) U2 and a number of specific proteins. Part of the SF3A subcomplex of the 17S U2 SnRNP complex which is composed of three subunits; SF3A3/SAP61, SF3A2/SAP62 and SF3A1/SAP114. SF3A associates with the splicing factor SF3B and a 12S RNA unit to form the mature 17S U2 small nuclear ribonucleoprotein complex (17S U2 snRNP). Identified in the spliceosome 'E' complex, a precursor of the spliceosome 'A' complex. Identified in the spliceosome 'A' and 'B' complexes. Identified in the spliceosome 'C' complex. Interacts with HTATSF1.

The protein localises to the nucleus. In terms of biological role, component of the 17S U2 SnRNP complex of the spliceosome, a large ribonucleoprotein complex that removes introns from transcribed pre-mRNAs. The 17S U2 SnRNP complex (1) directly participates in early spliceosome assembly and (2) mediates recognition of the intron branch site during pre-mRNA splicing by promoting the selection of the pre-mRNA branch-site adenosine, the nucleophile for the first step of splicing. Within the 17S U2 SnRNP complex, SF3A2 is part of the SF3A subcomplex that contributes to the assembly of the 17S U2 snRNP, and the subsequent assembly of the pre-spliceosome 'E' complex and the pre-catalytic spliceosome 'A' complex. Involved in pre-mRNA splicing as a component of pre-catalytic spliceosome 'B' complexes, including the Bact complex. Interacts directly with the duplex formed by U2 snRNA and the intron. In Homo sapiens (Human), this protein is Splicing factor 3A subunit 2 (SF3A2).